Consider the following 367-residue polypeptide: MKPFLRSQLERYAQRLQELDFLLSREDIMADMQQYRSISREHAEVTQVAGRYARYQQREADLAGAREMLEDPDMAEMAQEEIHAAETELVQLEDELQRLLLPKDPDDERNAFIEIRAGTGGDESALFAGDLARMYTRYAATVGWKVEVMSANESEIGGYKEVVLRIEGQSGTGPSGSGVYGALKFESGGHRVQRVPATETQGRIHTSACTVAVMPEPDEHQAITLNPADLRIDTFRASGAGGQHINKTDSAVRVVHLPTGIVAECQDGRSQHSNKAKALQVLQARIQEKERSERAAKEAALRKGLIGSGDRSDRIRTYNFPQGRLTDHRINLTLYKLLAIMEGDLGEVLQALQHAREAELLAELGLE.

Glutamine 243 is subject to N5-methylglutamine.

Belongs to the prokaryotic/mitochondrial release factor family. Methylated by PrmC. Methylation increases the termination efficiency of RF1.

The protein localises to the cytoplasm. Functionally, peptide chain release factor 1 directs the termination of translation in response to the peptide chain termination codons UAG and UAA. This chain is Peptide chain release factor 1, found in Acidovorax sp. (strain JS42).